A 435-amino-acid chain; its full sequence is 3-ketoacyl-CoA thiolase (435 aa).

Residue cysteine 98 is the Acyl-thioester intermediate of the active site. Catalysis depends on proton acceptor residues histidine 391 and cysteine 421.

Belongs to the thiolase-like superfamily. Thiolase family. Heterotetramer of two alpha chains (FadJ) and two beta chains (FadI).

The protein localises to the cytoplasm. The enzyme catalyses an acyl-CoA + acetyl-CoA = a 3-oxoacyl-CoA + CoA. The protein operates within lipid metabolism; fatty acid beta-oxidation. In terms of biological role, catalyzes the final step of fatty acid oxidation in which acetyl-CoA is released and the CoA ester of a fatty acid two carbons shorter is formed. The chain is 3-ketoacyl-CoA thiolase from Vibrio cholerae serotype O1 (strain ATCC 39541 / Classical Ogawa 395 / O395).